We begin with the raw amino-acid sequence, 560 residues long: MTILPKKKPNSSVGVSDHPDDPDRRTGSDPHQHQHQHSHGVRPGARPRASPPPWSYQAAPPASREDRRTESSSRPQQASPPPVGAGSSGGPGDATGMACVSGNRAELSGGVGCGGGMGGCCSGPGLSKRRRQATCSGGVAGGGTGPGAAGGGGGGGGGGGVGGPSPEQEEGAGYNSEDEYENASRLQSEDPATVEQQEHWFEKALQEKKGFVIKKMKEDGACLFRAVADQVYGDQDMHEVVRKHCMDYLMKNADYFSNYVTEDFTTYINRKRKNNCHGNHIEMQAMAEMYNRPVEVYQSGTEPINTFHGIHQNNDEPIRVSYHRNIHYNSVVNPNKATIGVGLGLPAFKPGFADQSLMKNAIKTSEESWIEQQMLEDKKRATDWEATNEAIEEQVARESYLQWLRDQEKQARQPRKASATCSSATAAASSGLEEWNARSPRQRSSAPSPEIPDPAHSDTAAKPPSPAGALALSKPPSPCAPGPSNQACVGPDRPTSSSLVSLYPALGYRAIMQEMSPTAFGLTDWEDDEILASVLAVSQQEYLDSMKKNAMHREPSPDSS.

Disordered stretches follow at residues 1 to 100 (MTIL…MACV) and 141 to 190 (GGGT…QSED). The segment covering 17–32 (DHPDDPDRRTGSDPHQ) has biased composition (basic and acidic residues). Gly residues predominate over residues 141–163 (GGGTGPGAAGGGGGGGGGGGVGG). Positions 211–334 (FVIKKMKEDG…NIHYNSVVNP (124 aa)) constitute an OTU domain. Residues 216–222 (MKEDGAC) are cys-loop. D219 is an active-site residue. C222 serves as the catalytic Nucleophile. Residues 271–281 (KRKNNCHGNHI) are variable-loop. The segment at 322–327 (YHRNIH) is his-loop. The active site involves H327. The interval 411 to 496 (ARQPRKASAT…ACVGPDRPTS (86 aa)) is disordered. Composition is skewed to low complexity over residues 417-430 (ASAT…AASS) and 437-448 (ARSPRQRSSAPS).

It belongs to the peptidase C85 family.

The catalysed reaction is Thiol-dependent hydrolysis of ester, thioester, amide, peptide and isopeptide bonds formed by the C-terminal Gly of ubiquitin (a 76-residue protein attached to proteins as an intracellular targeting signal).. Its function is as follows. Deubiquitinating enzyme that may function as negative regulator of the innate immune system. Has peptidase activity towards 'Lys-48'- and 'Lys-63'-linked polyubiquitin chains. Can also cleave 'Lys-11'-linked ubiquitin chains (in vitro). The chain is OTU domain-containing protein 5-A (otud5a) from Danio rerio (Zebrafish).